Here is a 239-residue protein sequence, read N- to C-terminus: tRNA uridine(34) hydroxylase (239 aa).

Positions 124 to 214 constitute a Rhodanese domain; the sequence is QGRELVMLDT…GILKYFEETD (91 aa). Catalysis depends on C178, which acts as the Cysteine persulfide intermediate.

It belongs to the TrhO family.

The enzyme catalyses uridine(34) in tRNA + AH2 + O2 = 5-hydroxyuridine(34) in tRNA + A + H2O. Its function is as follows. Catalyzes oxygen-dependent 5-hydroxyuridine (ho5U) modification at position 34 in tRNAs. This Bordetella parapertussis (strain 12822 / ATCC BAA-587 / NCTC 13253) protein is tRNA uridine(34) hydroxylase.